Consider the following 253-residue polypeptide: HTH-type transcriptional regulator AdiY (253 aa).

Residues 149-246 enclose the HTH araC/xylS-type domain; it reads DSVYQIIESD…GMTPLHYVSQ (98 aa). DNA-binding regions (H-T-H motif) lie at residues 166–187 and 213–236; these read SMVA…KSEN and ISQV…KDFY.

This is HTH-type transcriptional regulator AdiY (adiY) from Escherichia coli (strain K12).